Reading from the N-terminus, the 1922-residue chain is Kinesin-related protein 4 (1922 aa).

The region spanning 22-343 (KIKVAIRVRP…LQFAKRAKRV (322 aa)) is the Kinesin motor domain. Residue 101–108 (GQTSSGKT) participates in ATP binding. The tract at residues 448–538 (QKIKKIKNSE…DDEFKDNLNL (91 aa)) is disordered. The segment covering 456-468 (SENNISSSSSNSS) has biased composition (low complexity). 2 stretches are compositionally biased toward acidic residues: residues 469–480 (GEEDDDDKDDEN) and 488–532 (DKDD…DDEF). Residues 562 to 1712 (QVKVKREDLD…ELESTKQKNL (1151 aa)) adopt a coiled-coil conformation. Residues 1887–1922 (TSTDNLTTTSTSLKSKSSSNGENKENQNNNIIIKNN) form a disordered region.

It belongs to the TRAFAC class myosin-kinesin ATPase superfamily. Kinesin family.

It localises to the cytoplasm. Its subcellular location is the cytoskeleton. Microtubule-associated force-producing protein that plays a role in organelle transport. Its motor activity is directed toward the microtubule's plus end. Cooperates with dynein in organizing spindle assembly during cell division. This Dictyostelium discoideum (Social amoeba) protein is Kinesin-related protein 4 (kif4).